A 155-amino-acid chain; its full sequence is Plastocyanin, chloroplastic (155 aa).

The N-terminal 58 residues, Met1–Ala58, are a transit peptide targeting the chloroplast. The Plastocyanin-like domain maps to Gln59–Asn155. Positions 95, 140, 143, and 148 each coordinate Cu cation.

This sequence belongs to the plastocyanin family. Cu(2+) is required as a cofactor.

The protein resides in the plastid. It localises to the chloroplast thylakoid membrane. Functionally, participates in electron transfer between P700 and the cytochrome b6-f complex in photosystem I. The protein is Plastocyanin, chloroplastic (PETE) of Hordeum vulgare (Barley).